Consider the following 323-residue polypeptide: Fructose-1,6-bisphosphatase class 1 (323 aa).

Mg(2+)-binding residues include Glu-84, Asp-103, Leu-105, and Asp-106. Substrate contacts are provided by residues Asp-106–Ser-109, Asn-198, and Lys-264. Mg(2+) is bound at residue Glu-270.

It belongs to the FBPase class 1 family. In terms of assembly, homotetramer. Mg(2+) serves as cofactor.

It is found in the cytoplasm. The enzyme catalyses beta-D-fructose 1,6-bisphosphate + H2O = beta-D-fructose 6-phosphate + phosphate. Its pathway is carbohydrate biosynthesis; gluconeogenesis. This chain is Fructose-1,6-bisphosphatase class 1, found in Cellvibrio japonicus (strain Ueda107) (Pseudomonas fluorescens subsp. cellulosa).